Reading from the N-terminus, the 361-residue chain is Phospho-N-acetylmuramoyl-pentapeptide-transferase (361 aa).

The next 10 helical transmembrane spans lie at 21–41 (YITF…FVIG), 72–92 (TPTM…LLWV), 94–114 (LANV…LIGF), 135–155 (LAWT…VTPH), 169–189 (LLVN…VGAS), 200–220 (GLAI…AYLS), 240–260 (LAVF…FNAP), 263–283 (MVFM…AVSV), 289–309 (LVLA…MVQV), and 338–358 (TVVI…LSTL).

Belongs to the glycosyltransferase 4 family. MraY subfamily. The cofactor is Mg(2+).

Its subcellular location is the cell inner membrane. The enzyme catalyses UDP-N-acetyl-alpha-D-muramoyl-L-alanyl-gamma-D-glutamyl-meso-2,6-diaminopimeloyl-D-alanyl-D-alanine + di-trans,octa-cis-undecaprenyl phosphate = di-trans,octa-cis-undecaprenyl diphospho-N-acetyl-alpha-D-muramoyl-L-alanyl-D-glutamyl-meso-2,6-diaminopimeloyl-D-alanyl-D-alanine + UMP. The protein operates within cell wall biogenesis; peptidoglycan biosynthesis. Catalyzes the initial step of the lipid cycle reactions in the biosynthesis of the cell wall peptidoglycan: transfers peptidoglycan precursor phospho-MurNAc-pentapeptide from UDP-MurNAc-pentapeptide onto the lipid carrier undecaprenyl phosphate, yielding undecaprenyl-pyrophosphoryl-MurNAc-pentapeptide, known as lipid I. In Rhodospirillum centenum (strain ATCC 51521 / SW), this protein is Phospho-N-acetylmuramoyl-pentapeptide-transferase.